Here is a 395-residue protein sequence, read N- to C-terminus: Flap endonuclease 1 (395 aa).

The tract at residues 1–108 (MGILGLSKLL…DELEMRRQKA (108 aa)) is N-domain. Asp-34 is a Mg(2+) binding site. Arg-74 serves as a coordination point for DNA. Residues Asp-90, Glu-162, Glu-164, Asp-183, and Asp-185 each contribute to the Mg(2+) site. The I-domain stretch occupies residues 126–257 (MMEKMSKRTV…QKAWEGIQRY (132 aa)). Glu-162 serves as a coordination point for DNA. Gly-235 and Asp-237 together coordinate DNA. Mg(2+) is bound at residue Asp-237. The interval 340–348 (TQGRLDSFF) is interaction with PCNA.

It belongs to the XPG/RAD2 endonuclease family. FEN1 subfamily. Interacts with PCNA. Three molecules of FEN1 bind to one PCNA trimer with each molecule binding to one PCNA monomer. PCNA stimulates the nuclease activity without altering cleavage specificity. Mg(2+) is required as a cofactor. Post-translationally, phosphorylated. Phosphorylation upon DNA damage induces relocalization to the nuclear plasma.

The protein resides in the nucleus. The protein localises to the nucleolus. It localises to the nucleoplasm. Its subcellular location is the mitochondrion. Structure-specific nuclease with 5'-flap endonuclease and 5'-3' exonuclease activities involved in DNA replication and repair. During DNA replication, cleaves the 5'-overhanging flap structure that is generated by displacement synthesis when DNA polymerase encounters the 5'-end of a downstream Okazaki fragment. It enters the flap from the 5'-end and then tracks to cleave the flap base, leaving a nick for ligation. Also involved in the long patch base excision repair (LP-BER) pathway, by cleaving within the apurinic/apyrimidinic (AP) site-terminated flap. Acts as a genome stabilization factor that prevents flaps from equilibrating into structures that lead to duplications and deletions. Also possesses 5'-3' exonuclease activity on nicked or gapped double-stranded DNA, and exhibits RNase H activity. Also involved in replication and repair of rDNA and in repairing mitochondrial DNA. In Leishmania infantum, this protein is Flap endonuclease 1.